A 265-amino-acid polypeptide reads, in one-letter code: UPF0354 protein GWCH70_2742 (265 aa).

It belongs to the UPF0354 family.

The chain is UPF0354 protein GWCH70_2742 from Geobacillus sp. (strain WCH70).